A 266-amino-acid chain; its full sequence is Putative carbamate hydrolase RutD (266 aa).

An AB hydrolase-1 domain is found at 14 to 115 (PVVVLISGLG…TVLVSVNGWL (102 aa)).

Belongs to the AB hydrolase superfamily. Hydrolase RutD family.

The catalysed reaction is carbamate + 2 H(+) = NH4(+) + CO2. Its function is as follows. Involved in pyrimidine catabolism. May facilitate the hydrolysis of carbamate, a reaction that can also occur spontaneously. This is Putative carbamate hydrolase RutD from Escherichia coli O9:H4 (strain HS).